The chain runs to 436 residues: UPF0229 protein Meso_0256 (436 aa).

The interval P53–D110 is disordered. A compositionally biased stretch (gly residues) spans A94 to G106.

It belongs to the UPF0229 family.

This Chelativorans sp. (strain BNC1) protein is UPF0229 protein Meso_0256.